Here is a 126-residue protein sequence, read N- to C-terminus: UPF0047 protein AF_2050 (126 aa).

It belongs to the UPF0047 family.

This Archaeoglobus fulgidus (strain ATCC 49558 / DSM 4304 / JCM 9628 / NBRC 100126 / VC-16) protein is UPF0047 protein AF_2050.